The following is a 391-amino-acid chain: N-acetylaspartylglutamate synthase A (391 aa).

The 186-residue stretch at 115-300 (FQELAGHGVP…VGGIIADYTM (186 aa)) folds into the ATP-grasp domain. Residues Lys154, 189-199 (QKYVKESHGKD), and Arg215 contribute to the ATP site. Residues Asp260, Glu273, and Asn275 each contribute to the Mg(2+) site. Mn(2+)-binding residues include Asp260, Glu273, and Asn275. Ser319 carries the phosphoserine modification. A compositionally biased stretch (polar residues) spans 341–350 (TINSGSTSSE). The interval 341–379 (TINSGSTSSESEPELGEIRDSSASTMGAPPSMLPEPGYN) is disordered.

Belongs to the RimK family. Mg(2+) serves as cofactor. The cofactor is Mn(2+).

It localises to the cytoplasm. The catalysed reaction is N-acetyl-L-aspartate + L-glutamate + ATP = N-acetyl-L-aspartyl-L-glutamate + ADP + phosphate + H(+). The enzyme catalyses N-acetyl-L-aspartate + 2 L-glutamate + 2 ATP = N-acetyl-L-aspartyl-L-glutamyl-L-glutamate + 2 ADP + 2 phosphate + 2 H(+). In terms of biological role, catalyzes the synthesis of N-acetyl-L-aspartyl-L-glutamate (NAAG) and N-acetyl-L-aspartyl-L-glutamyl-L-glutamate. The sequence is that of N-acetylaspartylglutamate synthase A (RIMKLA) from Homo sapiens (Human).